The chain runs to 247 residues: Adenosine 5'-phosphosulfate reductase (247 aa).

Positions 133, 134, 216, and 219 each coordinate [4Fe-4S] cluster. Residues K222–S247 form a disordered region. Residue C242 is the Nucleophile; cysteine thiosulfonate intermediate of the active site.

The protein belongs to the PAPS reductase family. CysH subfamily. [4Fe-4S] cluster serves as cofactor.

The protein resides in the cytoplasm. It carries out the reaction [thioredoxin]-disulfide + sulfite + AMP + 2 H(+) = adenosine 5'-phosphosulfate + [thioredoxin]-dithiol. It participates in sulfur metabolism; hydrogen sulfide biosynthesis; sulfite from sulfate. Its function is as follows. Catalyzes the formation of sulfite from adenosine 5'-phosphosulfate (APS) using thioredoxin as an electron donor. The sequence is that of Adenosine 5'-phosphosulfate reductase from Rhodococcus erythropolis (strain PR4 / NBRC 100887).